A 494-amino-acid polypeptide reads, in one-letter code: Argininosuccinate lyase (494 aa).

Belongs to the lyase 1 family. Argininosuccinate lyase subfamily.

The protein resides in the cytoplasm. It catalyses the reaction 2-(N(omega)-L-arginino)succinate = fumarate + L-arginine. It functions in the pathway amino-acid biosynthesis; L-arginine biosynthesis; L-arginine from L-ornithine and carbamoyl phosphate: step 3/3. The protein is Argininosuccinate lyase of Methanosphaerula palustris (strain ATCC BAA-1556 / DSM 19958 / E1-9c).